Consider the following 51-residue polypeptide: Insulin (51 aa).

3 disulfides stabilise this stretch: cysteine 7-cysteine 37, cysteine 19-cysteine 50, and cysteine 36-cysteine 41.

Belongs to the insulin family. As to quaternary structure, heterodimer of a B chain and an A chain linked by two disulfide bonds.

Its subcellular location is the secreted. Insulin decreases blood glucose concentration. It increases cell permeability to monosaccharides, amino acids and fatty acids. It accelerates glycolysis, the pentose phosphate cycle, and glycogen synthesis in liver. The chain is Insulin (INS) from Didelphis virginiana (North American opossum).